The primary structure comprises 396 residues: NADH-quinone oxidoreductase subunit D 1 (396 aa).

This sequence belongs to the complex I 49 kDa subunit family. As to quaternary structure, NDH-1 is composed of 14 different subunits. Subunits NuoB, C, D, E, F, and G constitute the peripheral sector of the complex.

It localises to the cell inner membrane. The catalysed reaction is a quinone + NADH + 5 H(+)(in) = a quinol + NAD(+) + 4 H(+)(out). Functionally, NDH-1 shuttles electrons from NADH, via FMN and iron-sulfur (Fe-S) centers, to quinones in the respiratory chain. The immediate electron acceptor for the enzyme in this species is believed to be ubiquinone. Couples the redox reaction to proton translocation (for every two electrons transferred, four hydrogen ions are translocated across the cytoplasmic membrane), and thus conserves the redox energy in a proton gradient. This chain is NADH-quinone oxidoreductase subunit D 1, found in Beijerinckia indica subsp. indica (strain ATCC 9039 / DSM 1715 / NCIMB 8712).